Consider the following 215-residue polypeptide: Redox-sensing transcriptional repressor Rex (215 aa).

A DNA-binding region (H-T-H motif) is located at residues 18–57 (LYHRYLKYLDESGKERVSSAELSEAVKVDSATIRRDFSYF). Residue 92-97 (GVGNLG) coordinates NAD(+).

The protein belongs to the transcriptional regulatory Rex family. In terms of assembly, homodimer.

It localises to the cytoplasm. Functionally, modulates transcription in response to changes in cellular NADH/NAD(+) redox state. In Listeria innocua serovar 6a (strain ATCC BAA-680 / CLIP 11262), this protein is Redox-sensing transcriptional repressor Rex.